The chain runs to 119 residues: Holo-[acyl-carrier-protein] synthase (119 aa).

The Mg(2+) site is built by D8 and E60.

This sequence belongs to the P-Pant transferase superfamily. AcpS family. It depends on Mg(2+) as a cofactor.

Its subcellular location is the cytoplasm. The catalysed reaction is apo-[ACP] + CoA = holo-[ACP] + adenosine 3',5'-bisphosphate + H(+). In terms of biological role, transfers the 4'-phosphopantetheine moiety from coenzyme A to a Ser of acyl-carrier-protein. In Mycoplasma pneumoniae (strain ATCC 29342 / M129 / Subtype 1) (Mycoplasmoides pneumoniae), this protein is Holo-[acyl-carrier-protein] synthase.